The following is a 1089-amino-acid chain: Electroneutral sodium bicarbonate exchanger 1 (1089 aa).

Residues 1–476 are Extracellular-facing; the sequence is MPAGSNEPDG…DYRDALSLQC (476 aa). Residues 55–90 are disordered; the sequence is LGRQSHRHHRTHGQKHRRRGGRGKGASQGEEGLEAL. Over residues 58-76 the composition is skewed to basic residues; the sequence is QSHRHHRTHGQKHRRRGGR. A helical transmembrane segment spans residues 477-497; it reads LASFLFLYCACMSPVITFGGL. The Cytoplasmic portion of the chain corresponds to 498 to 505; sequence LGEATEGR. The chain crosses the membrane as a helical span at residues 506 to 526; sequence ISAIESLFGASMTGIAYSLFA. The Extracellular segment spans residues 527–563; that stretch reads GQPLTILGSTGPVLVFEKILFKFCKDYALSYLSLRAL. The chain crosses the membrane as a helical span at residues 564 to 584; the sequence is IGLWTAFLCIVLVATDASSLV. Topologically, residues 585 to 593 are cytoplasmic; the sequence is CYITRFTEE. The chain crosses the membrane as a helical span at residues 594–614; that stretch reads AFASLICIIFIYEAIEKLIHL. The Extracellular segment spans residues 615–685; that stretch reads AETYPIHMHS…EFMGSACGHH (71 aa). 2 disulfide bridges follow: C634–C682 and C636–C670. N-linked (GlcNAc) asparagine glycosylation occurs at N644. The chain crosses the membrane as a helical span at residues 686 to 706; it reads GPYTPDVLFWSCILFFATFIV. Residues 707–729 are Cytoplasmic-facing; the sequence is SSTLKTFKTSRYFPTRVRSMVSD. The chain crosses the membrane as a helical span at residues 730 to 750; sequence FAVFLTIFTMVVLDFLIGVPS. At 751–776 the chain is on the extracellular side; that stretch reads PKLQVPNVFKPTRDDRGWFINPIGPN. A helical membrane pass occupies residues 777–797; sequence PWWTVIAAIIPALLCTILIFM. Over 798–822 the chain is Cytoplasmic; that stretch reads DQQITAVIINRKEHKLKKGCGYHLD. A helical membrane pass occupies residues 823-843; sequence LLMVAVMLGVCSIMGLPWFVA. Residues 844-879 lie on the Extracellular side of the membrane; sequence ATVLSITHVNSLKLESECSAPGEQPKFLGIREQRVT. The chain crosses the membrane as a helical span at residues 880–900; that stretch reads GLMIFVLMGCSVFMTAVLKFI. Over 901–902 the chain is Cytoplasmic; that stretch reads PM. Residues 903–923 traverse the membrane as a helical segment; that stretch reads PVLYGVFLYMGVSSLQGIQFF. Topologically, residues 924–960 are extracellular; it reads DRLKLFGMPAKHQPDFIYLRHVPLRKVHLFTLVQLTC. Residues 961-981 traverse the membrane as a helical segment; that stretch reads LVLLWVIKASPAAIVFPMMVL. Over 982–1089 the chain is Cytoplasmic; that stretch reads ALVFVRKVMD…GNTKEKSPFN (108 aa).

This sequence belongs to the anion exchanger (TC 2.A.31) family. Homodimer. Expressed in the hippocampal neurons (at protein level). Highly expressed in brain with lower levels in lung, kidney and heart. In the kidney, there is high expression in the inner medulla, localized to the inner medullary collecting duct. In the brain, there seems to be three transcripts each having a different expression pattern. The smaller 3kb transcript has highest expression levels in the thalamus and the largest 9.5kb transcript has highest levels in the substantia nigra. The middle transcript of 4.4kb, which is also the main transcript in kidney, is highly expressed in thalamus. Hence, the highest levels are observed in the thalamus, amygdala and caudate nucleus and very low expression was seen in the corpus callosum.

It is found in the cell membrane. Its subcellular location is the apical cell membrane. The protein resides in the basolateral cell membrane. The protein localises to the cytoplasmic vesicle. It localises to the secretory vesicle. It is found in the synaptic vesicle membrane. It catalyses the reaction 2 hydrogencarbonate(out) + chloride(in) + Na(+)(out) = 2 hydrogencarbonate(in) + chloride(out) + Na(+)(in). Mediates electroneutral sodium- and carbonate-dependent chloride-HCO3(-) exchange with a Na(+):HCO3(-) stoichiometry of 2:1. Plays a major role in pH regulation in neurons. Mediates sodium reabsorption in the renal cortical collecting ducts. This Mus musculus (Mouse) protein is Electroneutral sodium bicarbonate exchanger 1.